A 105-amino-acid polypeptide reads, in one-letter code: dATP/dGTP diphosphohydrolase (105 aa).

It belongs to the Caudovirales dATP/dGTP diphosphohydrolase family. The cofactor is Co(2+).

The catalysed reaction is dGTP + H2O = dGMP + diphosphate + H(+). It catalyses the reaction dATP + H2O = dAMP + diphosphate + H(+). It participates in purine metabolism. In terms of biological role, catalyzes the hydrolysis of dGTP into dGMP, which is needed among other for the first step of biosynthesis of dZTP (2-amino-2'-deoxyadenosine-5'-triphosphate). The protein is dATP/dGTP diphosphohydrolase of Cyanophage S-2L (Cyanobacteria phage S-2L).